A 181-amino-acid chain; its full sequence is Probable toxin TacT (181 aa).

Belongs to the acetyltransferase family. In terms of assembly, forms a complex with cognate antitoxin TacA.

Functionally, probable toxin component of a type II toxin-antitoxin (TA) system. Might acetylate tRNA and inhibit translation. Should be neutralized by cognate antitoxin TacA (y4aR). The polypeptide is Probable toxin TacT (Sinorhizobium fredii (strain NBRC 101917 / NGR234)).